A 219-amino-acid chain; its full sequence is MGFKGAWNKRNRLIENPEEYYRLYKKLQRAYKLVREAIKRYGSFELLKGKTSLRDLEELLEERKQVLENLKKQLREAHKGKPKIEAEGDEQLKELIREVNRVQSEVRALEIITNRVRKYEEIYAQYKQMTEKKAYVDPKLWMRIRKMNEAGERKVVRTYSRATTIIPEFVGHTIAVHNGKTFIPVYITQDMVGHKLGEFAPTRTFKGHPDKTAKVVKKK.

Positions 1–128 (MGFKGAWNKR…YEEIYAQYKQ (128 aa)) are unknown. The small ribosomal subunit protein uS19 stretch occupies residues 129 to 219 (MTEKKAYVDP…DKTAKVVKKK (91 aa)).

This sequence belongs to the universal ribosomal protein uS19 family.

Protein S19 forms a complex with S13 that binds strongly to the 16S ribosomal RNA. This chain is Small ribosomal subunit protein uS19, found in Aquifex pyrophilus.